Consider the following 351-residue polypeptide: DNA polymerase IV (351 aa).

The UmuC domain maps to 4-185; sequence IIHVDMDCFF…LPLAKIPGVG (182 aa). Residues aspartate 8 and aspartate 103 each coordinate Mg(2+). Glutamate 104 is a catalytic residue.

The protein belongs to the DNA polymerase type-Y family. As to quaternary structure, monomer. It depends on Mg(2+) as a cofactor.

The protein localises to the cytoplasm. It carries out the reaction DNA(n) + a 2'-deoxyribonucleoside 5'-triphosphate = DNA(n+1) + diphosphate. Poorly processive, error-prone DNA polymerase involved in untargeted mutagenesis. Copies undamaged DNA at stalled replication forks, which arise in vivo from mismatched or misaligned primer ends. These misaligned primers can be extended by PolIV. Exhibits no 3'-5' exonuclease (proofreading) activity. May be involved in translesional synthesis, in conjunction with the beta clamp from PolIII. This is DNA polymerase IV from Salmonella choleraesuis (strain SC-B67).